A 239-amino-acid chain; its full sequence is MEKQEQLYEGKAKRIYRTSLPDQYWVEYKDDATAFNGEKRAQITGKGELNNRITAIFFTMLKERGIDNHFVRLLSATEQVVRKVEIIPLEVVVRNIAAGSLAKRLGMEEGTVLPQPVVEFYYKDDALGDPLVNASHIKVLGIASESDQATLERMGLAVNEVLVPYLRERNITLVDFKLEFGKTADGEILLADEISPDTCRFWDSVTNEKLDKDRFRRDLGNVEEAYKEMLTRLGGDVHV.

It belongs to the SAICAR synthetase family.

It carries out the reaction 5-amino-1-(5-phospho-D-ribosyl)imidazole-4-carboxylate + L-aspartate + ATP = (2S)-2-[5-amino-1-(5-phospho-beta-D-ribosyl)imidazole-4-carboxamido]succinate + ADP + phosphate + 2 H(+). It functions in the pathway purine metabolism; IMP biosynthesis via de novo pathway; 5-amino-1-(5-phospho-D-ribosyl)imidazole-4-carboxamide from 5-amino-1-(5-phospho-D-ribosyl)imidazole-4-carboxylate: step 1/2. The chain is Phosphoribosylaminoimidazole-succinocarboxamide synthase from Brevibacillus brevis (strain 47 / JCM 6285 / NBRC 100599).